Consider the following 473-residue polypeptide: Putative tyrosine recombinase XerC (473 aa).

The region spanning 4-82 (MTLPELTQEY…HLRTVYRYAM (79 aa)) is the Core-binding (CB) domain. The Tyr recombinase domain occupies 118–305 (RNWLRFLVQE…DYDLMREVMN (188 aa)). Catalysis depends on residues Arg-156, Lys-183, His-256, Arg-259, and His-283. Catalysis depends on Tyr-292, which acts as the O-(3'-phospho-DNA)-tyrosine intermediate. The span at 341–352 (SGTELQPATTES) shows a compositional bias: polar residues. The tract at residues 341-365 (SGTELQPATTESSEAKKADDTASNP) is disordered.

It belongs to the 'phage' integrase family.

The protein resides in the cytoplasm. Functionally, site-specific tyrosine recombinase, which acts by catalyzing the cutting and rejoining of the recombining DNA molecules. This is Putative tyrosine recombinase XerC from Pseudomonas syringae.